We begin with the raw amino-acid sequence, 218 residues long: Glutathione S-transferase (218 aa).

One can recognise a GST N-terminal domain in the interval 3 to 88 (SKPVLGYWDI…YIGRKYKLTG (86 aa)). Glutathione is bound by residues 9-10 (YW), 43-46 (RSAW), Lys-50, 59-60 (NL), and 72-73 (QT). The region spanning 90–206 (NEPEELRVSL…YIKAQQPKLF (117 aa)) is the GST C-terminal domain. Tyr-116 serves as a coordination point for substrate.

It belongs to the GST superfamily. Mu family.

The catalysed reaction is RX + glutathione = an S-substituted glutathione + a halide anion + H(+). In terms of biological role, conjugation of reduced glutathione to a wide number of exogenous and endogenous hydrophobic electrophiles. This Tyrophagus putrescentiae (Mold mite) protein is Glutathione S-transferase.